The chain runs to 188 residues: Capsid protein (188 aa).

The protein belongs to the tymoviruses capsid protein family.

The protein localises to the virion. In terms of biological role, self-assembles to form a T=3 icosahedral capsid composed of 180 copies of the capsid protein. The capsid encapsulates the single-stranded RNA genome. The polypeptide is Capsid protein (Solanum lycopersicum (Tomato)).